The sequence spans 178 residues: Methenyltetrahydromethanopterin cyclohydrolase (178 aa).

It belongs to the MCH family.

The protein resides in the cytoplasm. The enzyme catalyses 5,10-methenyl-5,6,7,8-tetrahydromethanopterin + H2O = N(5)-formyl-5,6,7,8-tetrahydromethanopterin + H(+). It participates in one-carbon metabolism; formaldehyde degradation; formate from formaldehyde (H(4)MPT route): step 3/5. Catalyzes the hydrolysis of methenyl-H(4)MPT(+) to 5-formyl-H(4)MPT. The sequence is that of Methenyltetrahydromethanopterin cyclohydrolase (mch) from Hyphomicrobium methylovorum.